The primary structure comprises 197 residues: Glycerol-3-phosphate acyltransferase (197 aa).

The next 5 membrane-spanning stretches (helical) occupy residues Met1–Ile21, Leu78–Gly98, Met111–Leu131, Phe136–Tyr155, and Phe159–Trp176.

This sequence belongs to the PlsY family. Probably interacts with PlsX.

The protein localises to the cell inner membrane. The catalysed reaction is an acyl phosphate + sn-glycerol 3-phosphate = a 1-acyl-sn-glycero-3-phosphate + phosphate. The protein operates within lipid metabolism; phospholipid metabolism. In terms of biological role, catalyzes the transfer of an acyl group from acyl-phosphate (acyl-PO(4)) to glycerol-3-phosphate (G3P) to form lysophosphatidic acid (LPA). This enzyme utilizes acyl-phosphate as fatty acyl donor, but not acyl-CoA or acyl-ACP. The protein is Glycerol-3-phosphate acyltransferase of Prochlorococcus marinus (strain MIT 9215).